The chain runs to 466 residues: Asparagine--tRNA ligase (466 aa).

The protein belongs to the class-II aminoacyl-tRNA synthetase family. As to quaternary structure, homodimer.

The protein resides in the cytoplasm. It carries out the reaction tRNA(Asn) + L-asparagine + ATP = L-asparaginyl-tRNA(Asn) + AMP + diphosphate + H(+). The protein is Asparagine--tRNA ligase of Myxococcus xanthus (strain DK1622).